Reading from the N-terminus, the 478-residue chain is Membrane-bound lytic murein transglycosylase F (478 aa).

A signal peptide spans Met-1–Val-22. The segment at Glu-23–Val-257 is non-LT domain. An LT domain region spans residues Lys-258 to Lys-478. Residue Glu-302 is part of the active site. The interval Ser-446 to Lys-478 is disordered. Acidic residues predominate over residues Ser-451–Ser-461.

This sequence in the N-terminal section; belongs to the bacterial solute-binding protein 3 family. In the C-terminal section; belongs to the transglycosylase Slt family.

It localises to the cell outer membrane. It catalyses the reaction Exolytic cleavage of the (1-&gt;4)-beta-glycosidic linkage between N-acetylmuramic acid (MurNAc) and N-acetylglucosamine (GlcNAc) residues in peptidoglycan, from either the reducing or the non-reducing ends of the peptidoglycan chains, with concomitant formation of a 1,6-anhydrobond in the MurNAc residue.. Its function is as follows. Murein-degrading enzyme that degrades murein glycan strands and insoluble, high-molecular weight murein sacculi, with the concomitant formation of a 1,6-anhydromuramoyl product. Lytic transglycosylases (LTs) play an integral role in the metabolism of the peptidoglycan (PG) sacculus. Their lytic action creates space within the PG sacculus to allow for its expansion as well as for the insertion of various structures such as secretion systems and flagella. The polypeptide is Membrane-bound lytic murein transglycosylase F (Shewanella sp. (strain ANA-3)).